Here is a 340-residue protein sequence, read N- to C-terminus: Cobalt-precorrin-5B C(1)-methyltransferase (340 aa).

The protein belongs to the CbiD family.

It carries out the reaction Co-precorrin-5B + S-adenosyl-L-methionine = Co-precorrin-6A + S-adenosyl-L-homocysteine. It participates in cofactor biosynthesis; adenosylcobalamin biosynthesis; cob(II)yrinate a,c-diamide from sirohydrochlorin (anaerobic route): step 6/10. Its function is as follows. Catalyzes the methylation of C-1 in cobalt-precorrin-5B to form cobalt-precorrin-6A. This Pyrobaculum aerophilum (strain ATCC 51768 / DSM 7523 / JCM 9630 / CIP 104966 / NBRC 100827 / IM2) protein is Cobalt-precorrin-5B C(1)-methyltransferase.